We begin with the raw amino-acid sequence, 315 residues long: tRNA U34 carboxymethyltransferase (315 aa).

Carboxy-S-adenosyl-L-methionine contacts are provided by residues lysine 79, tryptophan 93, lysine 98, glycine 117, 142 to 144, 169 to 170, tyrosine 193, and arginine 307; these read DPS and VE.

It belongs to the class I-like SAM-binding methyltransferase superfamily. CmoB family. As to quaternary structure, homotetramer.

It carries out the reaction carboxy-S-adenosyl-L-methionine + 5-hydroxyuridine(34) in tRNA = 5-carboxymethoxyuridine(34) in tRNA + S-adenosyl-L-homocysteine + H(+). Catalyzes carboxymethyl transfer from carboxy-S-adenosyl-L-methionine (Cx-SAM) to 5-hydroxyuridine (ho5U) to form 5-carboxymethoxyuridine (cmo5U) at position 34 in tRNAs. The chain is tRNA U34 carboxymethyltransferase from Helicobacter hepaticus (strain ATCC 51449 / 3B1).